Reading from the N-terminus, the 329-residue chain is Synaptonemal complex central element protein 1 (329 aa).

The interval 1–33 (MATRPQPLSVEPEGSADLLHGPEGARGRRGSTQ) is disordered. Coiled coils occupy residues 28 to 168 (RRGS…ETLM) and 194 to 294 (KEQL…ILAQ). Positions 295–329 (IQSTQKEEDSSWRTASPKPLEAHKETVQERPSSRT) are disordered. Residues 314–329 (LEAHKETVQERPSSRT) show a composition bias toward basic and acidic residues.

The protein belongs to the SYCE family. As to quaternary structure, homodimer. Found in a complex with SYCP1 and SYCE2. Interacts with SYCP1, SYCE2 and SYCE3. Interacts with SIX6OS1.

It localises to the nucleus. The protein resides in the chromosome. Functionally, major component of the transverse central element of synaptonemal complexes (SCS), formed between homologous chromosomes during meiotic prophase. Requires SYCP1 in order to be incorporated into the central element. May have a role in the synaptonemal complex assembly, stabilization and recombination. The polypeptide is Synaptonemal complex central element protein 1 (Syce1) (Rattus norvegicus (Rat)).